The chain runs to 411 residues: Peptidase T (411 aa).

A Zn(2+)-binding site is contributed by His78. The active site involves Asp80. Asp140 contributes to the Zn(2+) binding site. The active-site Proton acceptor is Glu173. Positions 174, 196, and 379 each coordinate Zn(2+).

Belongs to the peptidase M20B family. It depends on Zn(2+) as a cofactor.

The protein localises to the cytoplasm. It carries out the reaction Release of the N-terminal residue from a tripeptide.. Cleaves the N-terminal amino acid of tripeptides. The sequence is that of Peptidase T from Yersinia pseudotuberculosis serotype O:3 (strain YPIII).